Consider the following 274-residue polypeptide: Triosephosphate isomerase (274 aa).

13–15 (NWK) contributes to the substrate binding site. His-98 acts as the Electrophile in catalysis. Glu-170 (proton acceptor) is an active-site residue. The substrate site is built by Gly-176 and Ser-216.

Belongs to the triosephosphate isomerase family. As to quaternary structure, homodimer.

It is found in the cytoplasm. The catalysed reaction is D-glyceraldehyde 3-phosphate = dihydroxyacetone phosphate. Its pathway is carbohydrate biosynthesis; gluconeogenesis. It functions in the pathway carbohydrate degradation; glycolysis; D-glyceraldehyde 3-phosphate from glycerone phosphate: step 1/1. In terms of biological role, involved in the gluconeogenesis. Catalyzes stereospecifically the conversion of dihydroxyacetone phosphate (DHAP) to D-glyceraldehyde-3-phosphate (G3P). The polypeptide is Triosephosphate isomerase (Onion yellows phytoplasma (strain OY-M)).